Here is a 148-residue protein sequence, read N- to C-terminus: MKVVLQKDVLNLGDAGDVKEVADGYARNFLIPRRLAVRANDGNTKAAIHQKRLAELKRDKRVKVMKELSASIDGKTYEIKVKVGENDKLFGSVTANDIALAIKNTGVELDKRKLDLGEPIKSVGEFKIKVRLAEGVVPGIIVKVVGQA.

The protein belongs to the bacterial ribosomal protein bL9 family.

Its function is as follows. Binds to the 23S rRNA. In Leptospira biflexa serovar Patoc (strain Patoc 1 / Ames), this protein is Large ribosomal subunit protein bL9.